Here is a 203-residue protein sequence, read N- to C-terminus: ATP-dependent Clp protease proteolytic subunit 1 (203 aa).

Ser98 (nucleophile) is an active-site residue. His123 is a catalytic residue.

It belongs to the peptidase S14 family. As to quaternary structure, fourteen ClpP subunits assemble into 2 heptameric rings which stack back to back to give a disk-like structure with a central cavity, resembling the structure of eukaryotic proteasomes.

It localises to the cytoplasm. It catalyses the reaction Hydrolysis of proteins to small peptides in the presence of ATP and magnesium. alpha-casein is the usual test substrate. In the absence of ATP, only oligopeptides shorter than five residues are hydrolyzed (such as succinyl-Leu-Tyr-|-NHMec, and Leu-Tyr-Leu-|-Tyr-Trp, in which cleavage of the -Tyr-|-Leu- and -Tyr-|-Trp bonds also occurs).. Cleaves peptides in various proteins in a process that requires ATP hydrolysis. Has a chymotrypsin-like activity. Plays a major role in the degradation of misfolded proteins. The sequence is that of ATP-dependent Clp protease proteolytic subunit 1 from Chlamydia felis (strain Fe/C-56) (Chlamydophila felis).